A 397-amino-acid chain; its full sequence is Ubiquitin-like modifier-activating enzyme 5 (397 aa).

ATP is bound by residues glycine 77, aspartate 98, lysine 121, asparagine 144, and asparagine 178. 2 residues coordinate Zn(2+): cysteine 220 and cysteine 223. The active-site Glycyl thioester intermediate is the cysteine 244. Residues cysteine 297 and cysteine 302 each coordinate Zn(2+).

The protein belongs to the ubiquitin-activating E1 family. UBA5 subfamily.

Functionally, E1-like enzyme which activates UFM1. The chain is Ubiquitin-like modifier-activating enzyme 5 from Culex quinquefasciatus (Southern house mosquito).